The following is a 634-amino-acid chain: Probable potassium transport system protein Kup 2 (634 aa).

12 helical membrane passes run 15-35 (LTLGAIGVVYGDIGTSPLYAF), 55-75 (VLSLALWALIIVVTLKYVIFL), 101-121 (WVAVTLLGATGAALFYGDAII), 142-162 (GMSQTAIIGVTVGILAALFMF), 173-193 (LFGPVCLVWFVALAGLGLWHI), 208-228 (AVTFLVSHGVTGLFVLGAVFL), 252-272 (WLSFVWPALTLNYLGQGALAL), 303-323 (LVILATLATIIASQAVITGAY), 351-371 (IYMPGVNWLLLGGVLLLVLGF), 381-401 (YGIAVTGTMVVTTCMAFLIAW), 408-428 (PVWTALLIAPFLALDLFFFGA), and 435-455 (EGGWVPLLVAGLVGLVIFTWL).

It belongs to the HAK/KUP transporter (TC 2.A.72) family.

The protein localises to the cell inner membrane. The catalysed reaction is K(+)(in) + H(+)(in) = K(+)(out) + H(+)(out). In terms of biological role, transport of potassium into the cell. Likely operates as a K(+):H(+) symporter. This Novosphingobium aromaticivorans (strain ATCC 700278 / DSM 12444 / CCUG 56034 / CIP 105152 / NBRC 16084 / F199) protein is Probable potassium transport system protein Kup 2.